We begin with the raw amino-acid sequence, 891 residues long: Transportin-1 (891 aa).

HEAT repeat units follow at residues 14 to 40, 45 to 83, 92 to 125, 131 to 168, 178 to 208, 221 to 248, 260 to 287, 303 to 381, 389 to 420, 432 to 459, 477 to 510, 518 to 551, 559 to 597, 605 to 653, 664 to 695, 703 to 740, 748 to 784, 792 to 825, and 834 to 866; these read GLRE…QQLQ, FPDF…ATFS, YVKS…IVRV, LFQA…LDVD, NVFM…QYIV, YLQG…VQLI, KNVT…FWSA, PRLI…LSNV, TLMP…GAIA, PQIV…TLSR, FDKI…EEEA, LGII…ADAV, KYLD…QALG, EPVF…GLGA, LRDI…RVCP, QEFL…IKIG, ITVV…WVCP, DHFM…VAAN, and TFIC…KQML. Positions 35 to 103 constitute an Importin N-terminal domain; sequence IWQQLQHYSQ…KSELLPCIGA (69 aa). Positions 317–330 are enriched in acidic residues; sequence DDDESLADAEEDES. Residues 317–337 are disordered; it reads DDDESLADAEEDESFPDRDQD.

Belongs to the importin beta family. Importin beta-2 subfamily.

It localises to the cytoplasm. Its subcellular location is the nucleus. The protein resides in the nucleoplasm. In terms of biological role, functions in nuclear protein import as nuclear transport receptor. Serves as receptor for nuclear localization signals (NLS) in cargo substrates. Is thought to mediate docking of the importin/substrate complex to the nuclear pore complex (NPC) through binding to nucleoporin and the complex is subsequently translocated through the pore by an energy requiring, Ran-dependent mechanism. At the nucleoplasmic side of the NPC, Ran binds to the importin, the importin/substrate complex dissociates and importin is re-exported from the nucleus to the cytoplasm where GTP hydrolysis releases Ran. The directionality of nuclear import is thought to be conferred by an asymmetric distribution of the GTP- and GDP-bound forms of Ran between the cytoplasm and nucleus. The protein is Transportin-1 (TRN1) of Oryza sativa subsp. japonica (Rice).